The following is a 239-amino-acid chain: Protein UL24 homolog (239 aa).

Positions 212 to 239 (TPKLGNSKTSKRKRRNSKKQDFKKLVKN) are disordered. A compositionally biased stretch (basic and acidic residues) spans 229–239 (KKQDFKKLVKN).

This sequence belongs to the herpesviridae UL24 family.

Its subcellular location is the virion. It localises to the host cytoplasm. The protein resides in the host nucleus. It is found in the host nucleolus. The protein localises to the host Golgi apparatus. May participate in nuclear egress of viral particles. Plays a role in the dispersal of several host nucleolar proteins including NCL/nucleolin and NPM1. Since deletion of host NCL/nucleolin negatively impact on nuclear egress, UL24 supposedly acts on this process through its effect on host nucleoli. The polypeptide is Protein UL24 homolog (U49) (Homo sapiens (Human)).